Here is a 951-residue protein sequence, read N- to C-terminus: 5'-3' exoribonuclease 2 (951 aa).

The CCHC-type zinc-finger motif lies at 262–278 (PCALCNQFGHEVKDCEG). The residue at position 286 (K286) is an N6-acetyllysine. Positions 408–508 (KDDEDSFRRR…SDSEPEPEDN (101 aa)) are disordered. The segment covering 416–426 (RRQKEKRKRMK) has biased composition (basic residues). Position 439 is a phosphothreonine (T439). 2 stretches are compositionally biased toward polar residues: residues 445-458 (SRNS…SNPR) and 467-485 (QRNS…SDGS). S448, S471, S473, S475, S482, S487, S499, S501, and S678 each carry phosphoserine. 3 positions are modified to asymmetric dimethylarginine; alternate: R824, R847, and R851. Residues R824, R847, and R851 each carry the omega-N-methylarginine; alternate modification. The residue at position 880 (R880) is an Asymmetric dimethylarginine. R883 is modified (asymmetric dimethylarginine; alternate). R883 is subject to Omega-N-methylarginine; alternate. R895 bears the Omega-N-methylarginine mark. Residues 907–951 (NQYQMLGGPGGYPPRRDDHRGGRQGYPREGRKYPLPPPSGRYSWN) are disordered. Residues 920–938 (PRRDDHRGGRQGYPREGRK) are compositionally biased toward basic and acidic residues. R947 carries the post-translational modification Asymmetric dimethylarginine; alternate. R947 is subject to Omega-N-methylarginine; alternate.

The protein belongs to the 5'-3' exonuclease family. XRN2/RAT1 subfamily. In terms of assembly, interacts with POLR2A and SMN1/SMN2. Interacts with CDKN2AIP and NKRF. Interacts with CDKN2AIPNL; the interaction is direct. Interacts with TRIM71 (via NHL repeats) in an RNA-dependent manner. Interacts with DHX34; the interaction is RNA-independent. As to expression, expressed in the spleen, testis, heart, brain, lung, liver, skeletal muscle, and kidney.

It localises to the nucleus. It is found in the nucleolus. Its function is as follows. Possesses 5'-&gt;3' exoribonuclease activity. May promote the termination of transcription by RNA polymerase II. During transcription termination, cleavage at the polyadenylation site liberates a 5' fragment which is subsequently processed to form the mature mRNA and a 3' fragment which remains attached to the elongating polymerase. The processive degradation of this 3' fragment by this protein may promote termination of transcription. Binds to RNA polymerase II (RNAp II) transcription termination R-loops formed by G-rich pause sites. In Mus musculus (Mouse), this protein is 5'-3' exoribonuclease 2 (Xrn2).